A 550-amino-acid chain; its full sequence is Glucose-6-phosphate isomerase (550 aa).

Glu356 serves as the catalytic Proton donor. Active-site residues include His387 and Lys515.

The protein belongs to the GPI family.

It localises to the cytoplasm. It carries out the reaction alpha-D-glucose 6-phosphate = beta-D-fructose 6-phosphate. The protein operates within carbohydrate biosynthesis; gluconeogenesis. It functions in the pathway carbohydrate degradation; glycolysis; D-glyceraldehyde 3-phosphate and glycerone phosphate from D-glucose: step 2/4. Catalyzes the reversible isomerization of glucose-6-phosphate to fructose-6-phosphate. The chain is Glucose-6-phosphate isomerase from Aliivibrio salmonicida (strain LFI1238) (Vibrio salmonicida (strain LFI1238)).